Consider the following 199-residue polypeptide: Protein ASYMMETRIC LEAVES 2 (199 aa).

Residues 8–109 form the LOB domain; it reads SPCAACKFLR…IDLSCAKSEL (102 aa).

Belongs to the LOB domain-containing protein family. As to quaternary structure, homo- and heterodimer with AS1. Interacts with AS1. Part of the AS1 repressor complex composed of AS1, LBD6/AS2 and HDA6. Interacts with LFR. Expressed in young shoots, roots, stems, leaves, flowers and adaxial domains of cotyledonary and leaves primordia.

It is found in the nucleus. Negative regulator of cell proliferation in the adaxial side of leaves. Regulates the formation of a symmetric lamina and the establishment of venation. Positively regulates LATERAL ORGAN BOUNDARIES (LOB) within the shoot apex, and the class III HD-ZIP genes REV, PHB, and PHV. Interacts directly with ASYMMETRIC LEAVES 1 (AS1) to repress the knox homeobox genes KNAT1, KNAT2, and KNAT6 and the abaxial determinants ARF3, KAN2 and YAB5. May act in parallel with the RDR6-SGS3-AGO7 pathway, an endogenous RNA silencing pathway, to regulate the leaf morphogenesis. Required for the binding of AS1 to the KNOX genes. Involved in leaf polarity establishment by functioning cooperatively with RH10 or RID2 to repress abaxial genes ARF3, ARF4, KAN1, KAN2, YAB1 and YAB5, and the knox homeobox genes KNAT1, KNAT2, KNAT6, and STM to promote adaxial development in leaf primordia at shoot apical meristems at high temperatures. The protein is Protein ASYMMETRIC LEAVES 2 of Arabidopsis thaliana (Mouse-ear cress).